The chain runs to 33 residues: Gastrin (33 aa).

The disordered stretch occupies residues 1 to 21 (ELEPQGPPHLGTDLSKKQGPW). Glutamine 18 is modified (pyrrolidone carboxylic acid). Tyrosine 28 is modified (sulfotyrosine). Phenylalanine 33 carries the phenylalanine amide modification.

It belongs to the gastrin/cholecystokinin family.

It is found in the secreted. In terms of biological role, gastrin stimulates the stomach mucosa to produce and secrete hydrochloric acid and the pancreas to secrete its digestive enzymes. It also stimulates smooth muscle contraction and increases blood circulation and water secretion in the stomach and intestine. This chain is Gastrin (GAST), found in Chinchilla chinchilla (Short-tailed chinchilla).